A 114-amino-acid polypeptide reads, in one-letter code: T cell receptor beta variable 25-1 (114 aa).

The first 21 residues, M1–A21, serve as a signal peptide directing secretion. In terms of domain architecture, Ig-like spans D22–E114. A disulfide bond links C42 and C110. Residue N72 is glycosylated (N-linked (GlcNAc...) asparagine).

As to quaternary structure, alpha-beta TR is a heterodimer composed of an alpha and beta chain; disulfide-linked. The alpha-beta TR is associated with the transmembrane signaling CD3 coreceptor proteins to form the TR-CD3 (TcR or TCR). The assembly of alpha-beta TR heterodimers with CD3 occurs in the endoplasmic reticulum where a single alpha-beta TR heterodimer associates with one CD3D-CD3E heterodimer, one CD3G-CD3E heterodimer and one CD247 homodimer forming a stable octameric structure. CD3D-CD3E and CD3G-CD3E heterodimers preferentially associate with TR alpha and TR beta chains, respectively. The association of the CD247 homodimer is the last step of TcR assembly in the endoplasmic reticulum and is required for transport to the cell surface.

The protein localises to the cell membrane. V region of the variable domain of T cell receptor (TR) beta chain that participates in the antigen recognition. Alpha-beta T cell receptors are antigen specific receptors which are essential to the immune response and are present on the cell surface of T lymphocytes. Recognize peptide-major histocompatibility (MH) (pMH) complexes that are displayed by antigen presenting cells (APC), a prerequisite for efficient T cell adaptive immunity against pathogens. Binding of alpha-beta TR to pMH complex initiates TR-CD3 clustering on the cell surface and intracellular activation of LCK that phosphorylates the ITAM motifs of CD3G, CD3D, CD3E and CD247 enabling the recruitment of ZAP70. In turn ZAP70 phosphorylates LAT, which recruits numerous signaling molecules to form the LAT signalosome. The LAT signalosome propagates signal branching to three major signaling pathways, the calcium, the mitogen-activated protein kinase (MAPK) kinase and the nuclear factor NF-kappa-B (NF-kB) pathways, leading to the mobilization of transcription factors that are critical for gene expression and essential for T cell growth and differentiation. The T cell repertoire is generated in the thymus, by V-(D)-J rearrangement. This repertoire is then shaped by intrathymic selection events to generate a peripheral T cell pool of self-MH restricted, non-autoaggressive T cells. Post-thymic interaction of alpha-beta TR with the pMH complexes shapes TR structural and functional avidity. The chain is T cell receptor beta variable 25-1 from Homo sapiens (Human).